We begin with the raw amino-acid sequence, 150 residues long: Dihydroneopterin triphosphate diphosphatase (150 aa).

The 142-residue stretch at 5-146 folds into the Nudix hydrolase domain; the sequence is VYKRPVSILV…SNRQAIEQFV (142 aa). 3 residues coordinate substrate: Lys7, Arg29, and Thr40. The short motif at 41 to 62 is the Nudix box element; it reads GSVEEGETAPQAAMREVKEEVT. Residues Glu56 and Glu60 each coordinate Mg(2+). Residue 81-84 participates in substrate binding; the sequence is FEIF. Glu117 serves as a coordination point for Mg(2+). Substrate is bound at residue Ser135.

The protein belongs to the Nudix hydrolase family. Requires Mg(2+) as cofactor.

It catalyses the reaction 7,8-dihydroneopterin 3'-triphosphate + H2O = 7,8-dihydroneopterin 3'-phosphate + diphosphate + H(+). Its function is as follows. Catalyzes the hydrolysis of dihydroneopterin triphosphate to dihydroneopterin monophosphate and pyrophosphate. Required for efficient folate biosynthesis. Can also hydrolyze nucleoside triphosphates with a preference for dATP. The protein is Dihydroneopterin triphosphate diphosphatase (nudB) of Escherichia coli O157:H7.